We begin with the raw amino-acid sequence, 70 residues long: Small ribosomal subunit protein bS21B (70 aa).

The disordered stretch occupies residues 37 to 70; that stretch reads SYEKPTTERKRKKAAAVARLRKQVRRSMPPKKKY. Over residues 45–70 the composition is skewed to basic residues; the sequence is RKRKKAAAVARLRKQVRRSMPPKKKY.

Belongs to the bacterial ribosomal protein bS21 family.

The protein is Small ribosomal subunit protein bS21B of Burkholderia pseudomallei (strain K96243).